Consider the following 495-residue polypeptide: Maternal protein exuperantia-1 (495 aa).

Disordered stretches follow at residues 197 to 217 (DESA…SSND) and 377 to 495 (TIKP…AATN). 2 stretches are compositionally biased toward polar residues: residues 207–216 (ENVNRNGSSN) and 398–414 (AASS…TSTE).

Its function is as follows. Ensures the proper localization of the mRNA of the bicoid gene to the anterior regions of the oocyte thus playing a fundamental role in the establishment of the polarity of the oocyte. May bind the bcd mRNA. This is Maternal protein exuperantia-1 (exu1) from Drosophila pseudoobscura pseudoobscura (Fruit fly).